Consider the following 1137-residue polypeptide: Otoancorin (1137 aa).

The N-terminal stretch at 1–23 is a signal peptide; that stretch reads MSQGPRTCSLLLVLLLSHGGAYQ. 11 N-linked (GlcNAc...) asparagine glycosylation sites follow: N156, N211, N244, N289, N321, N380, N384, N530, N594, N740, and N798. Over residues 1095–1115 the composition is skewed to polar residues; that stretch reads HSWQTDPLSSSPTWPASTGSP. The tract at residues 1095–1119 is disordered; sequence HSWQTDPLSSSPTWPASTGSPTGEP. G1113 carries the GPI-anchor amidated glycine lipid modification. Residues 1114–1137 constitute a propeptide, removed in mature form; that stretch reads SPTGEPASQALWLGCTLLLLTAKS.

It belongs to the stereocilin family. As to expression, expressed in the inner ear and vestibule.

It localises to the apical cell membrane. The protein localises to the secreted. It is found in the extracellular space. The protein resides in the extracellular matrix. Functionally, may act as an adhesion molecule. The sequence is that of Otoancorin (Otoa) from Mus musculus (Mouse).